We begin with the raw amino-acid sequence, 430 residues long: Adenylosuccinate synthetase (430 aa).

GTP contacts are provided by residues 12–18 (GDEGKGK) and 40–42 (GHT). Residue aspartate 13 is the Proton acceptor of the active site. 2 residues coordinate Mg(2+): aspartate 13 and glycine 40. IMP contacts are provided by residues 13-16 (DEGK), 38-41 (NAGH), threonine 128, arginine 142, glutamine 223, threonine 238, and arginine 302. Histidine 41 acts as the Proton donor in catalysis. 298-304 (VNTGRKR) is a substrate binding site. GTP is bound by residues arginine 304, 330 to 332 (KLD), and 412 to 414 (GVG).

Belongs to the adenylosuccinate synthetase family. Homodimer. The cofactor is Mg(2+).

Its subcellular location is the cytoplasm. It catalyses the reaction IMP + L-aspartate + GTP = N(6)-(1,2-dicarboxyethyl)-AMP + GDP + phosphate + 2 H(+). Its pathway is purine metabolism; AMP biosynthesis via de novo pathway; AMP from IMP: step 1/2. In terms of biological role, plays an important role in the de novo pathway of purine nucleotide biosynthesis. Catalyzes the first committed step in the biosynthesis of AMP from IMP. The sequence is that of Adenylosuccinate synthetase from Corynebacterium glutamicum (strain ATCC 13032 / DSM 20300 / JCM 1318 / BCRC 11384 / CCUG 27702 / LMG 3730 / NBRC 12168 / NCIMB 10025 / NRRL B-2784 / 534).